Consider the following 95-residue polypeptide: Large ribosomal subunit protein eL37x (95 aa).

Residues C19, C22, C34, and C37 each contribute to the Zn(2+) site. The C4-type zinc-finger motif lies at 19–37 (CVRCGRRSFHIQKSRCSAC). The tract at residues 73-95 (RFKTGFREGTEAKPRSKASASSA) is disordered. Residues 77–86 (GFREGTEAKP) are compositionally biased toward basic and acidic residues.

Belongs to the eukaryotic ribosomal protein eL37 family. It depends on Zn(2+) as a cofactor.

Binds to the 23S rRNA. The sequence is that of Large ribosomal subunit protein eL37x (RPL37C) from Arabidopsis thaliana (Mouse-ear cress).